A 262-amino-acid chain; its full sequence is uncharacterized protein (262 aa).

This is an uncharacterized protein from Bacillus subtilis (strain 168).